Here is a 211-residue protein sequence, read N- to C-terminus: Probable superoxide dismutase [Mn], mitochondrial (211 aa).

Positions 36, 84, 173, and 177 each coordinate Mn(2+).

It belongs to the iron/manganese superoxide dismutase family. As to quaternary structure, homotetramer. Mn(2+) is required as a cofactor.

Its subcellular location is the mitochondrion matrix. The enzyme catalyses 2 superoxide + 2 H(+) = H2O2 + O2. In terms of biological role, destroys superoxide anion radicals which are normally produced within the cells and which are toxic to biological systems. This chain is Probable superoxide dismutase [Mn], mitochondrial, found in Debaryomyces hansenii (strain ATCC 36239 / CBS 767 / BCRC 21394 / JCM 1990 / NBRC 0083 / IGC 2968) (Yeast).